The sequence spans 254 residues: Anamorsin homolog (254 aa).

The tract at residues 4–133 (VQENNHVLYL…EVGSKSKLSF (130 aa)) is N-terminal SAM-like domain. A linker region spans residues 134 to 165 (AKKSNVAAVWKLDDNEEEERIDDEELLDEDDK). Positions 176, 185, 188, and 190 each coordinate [2Fe-2S] cluster. A fe-S binding site A region spans residues 176–190 (CGTTGKRKACKDCSC). Residues C215, C218, C226, and C229 each coordinate [4Fe-4S] cluster. 2 consecutive short sequence motifs (cx2C motif) follow at residues 215 to 218 (CGSC) and 226 to 229 (CATC). Residues 215–229 (CGSCYLGDAFRCATC) form a fe-S binding site B region.

The protein belongs to the anamorsin family. Monomer. It depends on [2Fe-2S] cluster as a cofactor. [4Fe-4S] cluster serves as cofactor.

It is found in the cytoplasm. The protein resides in the mitochondrion intermembrane space. Component of the cytosolic iron-sulfur (Fe-S) protein assembly (CIA) machinery. Required for the maturation of extramitochondrial Fe-S proteins. Part of an electron transfer chain functioning in an early step of cytosolic Fe-S biogenesis, facilitating the de novo assembly of a [4Fe-4S] cluster on the cytosolic Fe-S scaffold complex. Electrons are transferred from NADPH via a FAD- and FMN-containing diflavin oxidoreductase. Together with the diflavin oxidoreductase, also required for the assembly of the diferric tyrosyl radical cofactor of ribonucleotide reductase (RNR), probably by providing electrons for reduction during radical cofactor maturation in the catalytic small subunit. In Anopheles gambiae (African malaria mosquito), this protein is Anamorsin homolog.